The primary structure comprises 245 residues: NAD-dependent protein deacylase (245 aa).

One can recognise a Deacetylase sirtuin-type domain in the interval Met-1–His-237. Position 13 to 32 (Gly-13 to Trp-32) interacts with NAD(+). Residues Tyr-57 and Arg-60 each contribute to the substrate site. An NAD(+)-binding site is contributed by Gln-94–Asp-97. Residue His-112 is the Proton acceptor of the active site. Residues Cys-120 and Cys-139 each coordinate Zn(2+). Residues Gly-179 to Ser-181, Asn-205 to Glu-207, and Ala-223 each bind NAD(+).

This sequence belongs to the sirtuin family. Class III subfamily. Requires Zn(2+) as cofactor.

It localises to the cytoplasm. The catalysed reaction is N(6)-acetyl-L-lysyl-[protein] + NAD(+) + H2O = 2''-O-acetyl-ADP-D-ribose + nicotinamide + L-lysyl-[protein]. It carries out the reaction N(6)-succinyl-L-lysyl-[protein] + NAD(+) + H2O = 2''-O-succinyl-ADP-D-ribose + nicotinamide + L-lysyl-[protein]. Functionally, NAD-dependent lysine deacetylase and desuccinylase that specifically removes acetyl and succinyl groups on target proteins. Modulates the activities of several proteins which are inactive in their acylated form. The chain is NAD-dependent protein deacylase from Vibrio vulnificus (strain YJ016).